The chain runs to 968 residues: RNA polymerase-associated protein RapA (968 aa).

The Helicase ATP-binding domain maps to 163 to 332; sequence EVGRRYAPRV…FARLRLLDPD (170 aa). Residue 176-183 coordinates ATP; it reads DEVGLGKT. The DEAH box motif lies at 278–281; the sequence is DEAH. The Helicase C-terminal domain occupies 491–655; the sequence is RVDWLIEFLK…EFAEELLNVL (165 aa).

This sequence belongs to the SNF2/RAD54 helicase family. RapA subfamily. Interacts with the RNAP. Has a higher affinity for the core RNAP than for the holoenzyme. Its ATPase activity is stimulated by binding to RNAP.

Transcription regulator that activates transcription by stimulating RNA polymerase (RNAP) recycling in case of stress conditions such as supercoiled DNA or high salt concentrations. Probably acts by releasing the RNAP, when it is trapped or immobilized on tightly supercoiled DNA. Does not activate transcription on linear DNA. Probably not involved in DNA repair. The chain is RNA polymerase-associated protein RapA from Shewanella oneidensis (strain ATCC 700550 / JCM 31522 / CIP 106686 / LMG 19005 / NCIMB 14063 / MR-1).